The primary structure comprises 218 residues: NAD(P)H-quinone oxidoreductase subunit I (218 aa).

4Fe-4S ferredoxin-type domains follow at residues 55 to 84 and 95 to 124; these read GRIHYEFDKCIACEVCVRVCPINLPVVDWV and RNYSIDFGACIFCGNCVEYCPTNCLSMTEE. 8 residues coordinate [4Fe-4S] cluster: Cys64, Cys67, Cys70, Cys74, Cys104, Cys107, Cys110, and Cys114. Positions 169-218 are disordered; that stretch reads MDPHELPANQQRAGKLPSQIIKELQAEKSEEKGNNNSSDIVPNKLNSTNK. Over residues 192 to 201 the composition is skewed to basic and acidic residues; it reads LQAEKSEEKG. Positions 202–218 are enriched in polar residues; the sequence is NNNSSDIVPNKLNSTNK.

Belongs to the complex I 23 kDa subunit family. As to quaternary structure, NDH-1 is composed of at least 11 different subunits. [4Fe-4S] cluster serves as cofactor.

It localises to the cellular thylakoid membrane. It carries out the reaction a plastoquinone + NADH + (n+1) H(+)(in) = a plastoquinol + NAD(+) + n H(+)(out). It catalyses the reaction a plastoquinone + NADPH + (n+1) H(+)(in) = a plastoquinol + NADP(+) + n H(+)(out). NDH-1 shuttles electrons from an unknown electron donor, via FMN and iron-sulfur (Fe-S) centers, to quinones in the respiratory and/or the photosynthetic chain. The immediate electron acceptor for the enzyme in this species is believed to be plastoquinone. Couples the redox reaction to proton translocation, and thus conserves the redox energy in a proton gradient. The polypeptide is NAD(P)H-quinone oxidoreductase subunit I (Prochlorococcus marinus (strain NATL1A)).